Reading from the N-terminus, the 384-residue chain is F-box/kelch-repeat protein At3g44120 (384 aa).

The region spanning Met-1–Lys-46 is the F-box domain. Kelch repeat units lie at residues Cys-156–Phe-202, Ser-264–Asp-314, and Gly-352–Tyr-384.

The protein is F-box/kelch-repeat protein At3g44120 of Arabidopsis thaliana (Mouse-ear cress).